A 147-amino-acid chain; its full sequence is Small ribosomal subunit protein uS12 (147 aa).

It belongs to the universal ribosomal protein uS12 family. In terms of assembly, part of the 30S ribosomal subunit.

In terms of biological role, with S4 and S5 plays an important role in translational accuracy. Located at the interface of the 30S and 50S subunits. This is Small ribosomal subunit protein uS12 from Thermococcus celer.